A 445-amino-acid chain; its full sequence is Phosphoglucosamine mutase (445 aa).

Catalysis depends on Ser104, which acts as the Phosphoserine intermediate. Positions 104, 243, 245, and 247 each coordinate Mg(2+). The residue at position 104 (Ser104) is a Phosphoserine.

Belongs to the phosphohexose mutase family. Requires Mg(2+) as cofactor. In terms of processing, activated by phosphorylation.

The catalysed reaction is alpha-D-glucosamine 1-phosphate = D-glucosamine 6-phosphate. Catalyzes the conversion of glucosamine-6-phosphate to glucosamine-1-phosphate. This is Phosphoglucosamine mutase from Chromobacterium violaceum (strain ATCC 12472 / DSM 30191 / JCM 1249 / CCUG 213 / NBRC 12614 / NCIMB 9131 / NCTC 9757 / MK).